The following is a 181-amino-acid chain: MSNSVVAKRYADALFQLGREKNSLDQLVADFLEVRQIFTNDQKLNVFLKHPKIDNEKKKQFLADVFKGADPVVINTLKLLVDRHRTSTIPSIVDHLVALVNDTKGIADATVYSIRELNTDEKEQLQTSFAKRLGKRSVQITNVVDPKILGGMKIRVGNTIYDGTVSNKLNRISRSIVSANK.

The protein belongs to the ATPase delta chain family. As to quaternary structure, F-type ATPases have 2 components, F(1) - the catalytic core - and F(0) - the membrane proton channel. F(1) has five subunits: alpha(3), beta(3), gamma(1), delta(1), epsilon(1). F(0) has three main subunits: a(1), b(2) and c(10-14). The alpha and beta chains form an alternating ring which encloses part of the gamma chain. F(1) is attached to F(0) by a central stalk formed by the gamma and epsilon chains, while a peripheral stalk is formed by the delta and b chains.

The protein resides in the cell membrane. F(1)F(0) ATP synthase produces ATP from ADP in the presence of a proton or sodium gradient. F-type ATPases consist of two structural domains, F(1) containing the extramembraneous catalytic core and F(0) containing the membrane proton channel, linked together by a central stalk and a peripheral stalk. During catalysis, ATP synthesis in the catalytic domain of F(1) is coupled via a rotary mechanism of the central stalk subunits to proton translocation. Functionally, this protein is part of the stalk that links CF(0) to CF(1). It either transmits conformational changes from CF(0) to CF(1) or is implicated in proton conduction. This is ATP synthase subunit delta from Oceanobacillus iheyensis (strain DSM 14371 / CIP 107618 / JCM 11309 / KCTC 3954 / HTE831).